We begin with the raw amino-acid sequence, 299 residues long: Type II restriction enzyme BglI (299 aa).

3 residues coordinate Mg(2+): D116, D142, and I143.

In terms of assembly, homodimer. It depends on Mg(2+) as a cofactor.

The catalysed reaction is Endonucleolytic cleavage of DNA to give specific double-stranded fragments with terminal 5'-phosphates.. In terms of biological role, a P subtype restriction enzyme that recognizes the double-stranded sequence 5'-GCCNNNNNGGC-3' and cleaves before N-8. The protein is Type II restriction enzyme BglI (bglIR) of Bacillus subtilis.